Consider the following 243-residue polypeptide: 6-carboxyhexanoate--CoA ligase (243 aa).

It belongs to the BioW family. In terms of assembly, homodimer. Mg(2+) serves as cofactor.

It catalyses the reaction heptanedioate + ATP + CoA = 6-carboxyhexanoyl-CoA + AMP + diphosphate. Its pathway is metabolic intermediate metabolism; pimeloyl-CoA biosynthesis; pimeloyl-CoA from pimelate: step 1/1. Functionally, catalyzes the transformation of pimelate into pimeloyl-CoA with concomitant hydrolysis of ATP to AMP. The protein is 6-carboxyhexanoate--CoA ligase of Corynebacterium pseudotuberculosis (strain FRC41).